The primary structure comprises 460 residues: Bifunctional protein GlmU (460 aa).

The segment at 1–232 is pyrophosphorylase; it reads MALNVVILAA…AIEVEGANNR (232 aa). UDP-N-acetyl-alpha-D-glucosamine-binding positions include 8 to 11, Lys22, Gln73, 78 to 79, 100 to 102, Gly137, Glu157, Asn172, and Asn230; these read LAAG, GT, and YGD. Position 102 (Asp102) interacts with Mg(2+). Asn230 is a Mg(2+) binding site. A linker region spans residues 233 to 253; it reads VQLAQLERAYQAREAEKLMLA. The tract at residues 254 to 460 is N-acetyltransferase; the sequence is GANLRDPSRI…GWQRPVKIKK (207 aa). The UDP-N-acetyl-alpha-D-glucosamine site is built by Arg336 and Lys354. Catalysis depends on His366, which acts as the Proton acceptor. UDP-N-acetyl-alpha-D-glucosamine contacts are provided by Tyr369 and Asn380. Residues Ala383, 389–390, Ser408, Ala426, and Arg443 each bind acetyl-CoA; that span reads NY.

The protein in the N-terminal section; belongs to the N-acetylglucosamine-1-phosphate uridyltransferase family. In the C-terminal section; belongs to the transferase hexapeptide repeat family. As to quaternary structure, homotrimer. Mg(2+) is required as a cofactor.

The protein resides in the cytoplasm. The enzyme catalyses alpha-D-glucosamine 1-phosphate + acetyl-CoA = N-acetyl-alpha-D-glucosamine 1-phosphate + CoA + H(+). It carries out the reaction N-acetyl-alpha-D-glucosamine 1-phosphate + UTP + H(+) = UDP-N-acetyl-alpha-D-glucosamine + diphosphate. It participates in nucleotide-sugar biosynthesis; UDP-N-acetyl-alpha-D-glucosamine biosynthesis; N-acetyl-alpha-D-glucosamine 1-phosphate from alpha-D-glucosamine 6-phosphate (route II): step 2/2. It functions in the pathway nucleotide-sugar biosynthesis; UDP-N-acetyl-alpha-D-glucosamine biosynthesis; UDP-N-acetyl-alpha-D-glucosamine from N-acetyl-alpha-D-glucosamine 1-phosphate: step 1/1. The protein operates within bacterial outer membrane biogenesis; LPS lipid A biosynthesis. Catalyzes the last two sequential reactions in the de novo biosynthetic pathway for UDP-N-acetylglucosamine (UDP-GlcNAc). The C-terminal domain catalyzes the transfer of acetyl group from acetyl coenzyme A to glucosamine-1-phosphate (GlcN-1-P) to produce N-acetylglucosamine-1-phosphate (GlcNAc-1-P), which is converted into UDP-GlcNAc by the transfer of uridine 5-monophosphate (from uridine 5-triphosphate), a reaction catalyzed by the N-terminal domain. This Shewanella baltica (strain OS195) protein is Bifunctional protein GlmU.